A 73-amino-acid chain; its full sequence is Translation initiation factor IF-1 (73 aa).

Positions 1-73 (MSKKKDVIEM…TRGRITYRYK (73 aa)) constitute an S1-like domain.

Belongs to the IF-1 family. As to quaternary structure, component of the 30S ribosomal translation pre-initiation complex which assembles on the 30S ribosome in the order IF-2 and IF-3, IF-1 and N-formylmethionyl-tRNA(fMet); mRNA recruitment can occur at any time during PIC assembly.

The protein localises to the cytoplasm. Its function is as follows. One of the essential components for the initiation of protein synthesis. Stabilizes the binding of IF-2 and IF-3 on the 30S subunit to which N-formylmethionyl-tRNA(fMet) subsequently binds. Helps modulate mRNA selection, yielding the 30S pre-initiation complex (PIC). Upon addition of the 50S ribosomal subunit IF-1, IF-2 and IF-3 are released leaving the mature 70S translation initiation complex. This Roseiflexus castenholzii (strain DSM 13941 / HLO8) protein is Translation initiation factor IF-1.